A 224-amino-acid chain; its full sequence is UPF0758 protein Lm4b_01560 (224 aa).

The MPN domain occupies 102–224 (VVRCPEDAVK…YISLKEKGYF (123 aa)). Zn(2+)-binding residues include H173, H175, and D186. The JAMM motif signature appears at 173-186 (HNHPSGDPTPSSED).

It belongs to the UPF0758 family.

The protein is UPF0758 protein Lm4b_01560 of Listeria monocytogenes serotype 4b (strain CLIP80459).